Consider the following 173-residue polypeptide: Co-chaperone protein HscB homolog (173 aa).

Positions 5–77 constitute a J domain; that stretch reads SHFALFDLEP…SQRARYLLSL (73 aa).

Belongs to the HscB family. In terms of assembly, interacts with HscA and stimulates its ATPase activity.

Its function is as follows. Co-chaperone involved in the maturation of iron-sulfur cluster-containing proteins. Seems to help targeting proteins to be folded toward HscA. This chain is Co-chaperone protein HscB homolog, found in Azotobacter vinelandii (strain DJ / ATCC BAA-1303).